The chain runs to 43 residues: Potassium channel toxin gamma-KTx 4.11 (43 aa).

4 disulfide bridges follow: C5–C23, C11–C34, C20–C39, and C24–C41.

This sequence belongs to the ergtoxin family. Gamma-KTx 4 subfamily. Expressed by the venom gland.

The protein resides in the secreted. In terms of biological role, reversibly blocks Kv11/ERG potassium channels. This Centruroides noxius (Mexican scorpion) protein is Potassium channel toxin gamma-KTx 4.11.